An 89-amino-acid chain; its full sequence is Small ribosomal subunit protein bS20 (89 aa).

A disordered region spans residues 1-28 (MTLANIKSAKKRAVQSEKSRQHNASQRS).

This sequence belongs to the bacterial ribosomal protein bS20 family.

Binds directly to 16S ribosomal RNA. In Mannheimia succiniciproducens (strain KCTC 0769BP / MBEL55E), this protein is Small ribosomal subunit protein bS20.